The following is a 501-amino-acid chain: Cytochrome P450 71B25 (501 aa).

The helical transmembrane segment at 1–21 threads the bilayer; the sequence is MAILQSFLLLLSLPFLFTLIY. C445 contacts heme.

The protein belongs to the cytochrome P450 family. Heme is required as a cofactor.

It localises to the membrane. This chain is Cytochrome P450 71B25 (CYP71B25), found in Arabidopsis thaliana (Mouse-ear cress).